The primary structure comprises 576 residues: MRYTQFFIPTLKETPSDAEVVSHQLMMRSGMIRKIAAGIYTYMPLGLRSIRKFEQIVREEMNRAGAIELLMPGVQPAELWIESKRWAQYGKELLRFKDRKDNEFCMGPTHEEIITDIARREVKSYRQMPVNFYQIQTKFRDEIRPRFGLMRGREFIMKDAYSFDVDSSAADLSYDKMYQAYNRIFERCGLNFRAVEADTGSIGGSASHEFMVLASSGEDAIVSCNACRYAANVEKAEGVRQQQGGAGQQALTKVHTPDKKTIAEVAEFLGLPQSGTVKALVLSNGEGQFVMALVRGDHELNELKLKNRLGWDEIQMATDDEILRFTGSPPGFLGPLGLKAELQVVADYAVETMADFVIGANETDQHYTGANTGRDFQISQIADIRLIGAGDPCPRCSGGTLEVWRGIEVGHVFKLGTKYSSSMNATYLDKDGKEQIIFMGCYGIGIGRTVAASIEQNHDENGVIWPLPLAPFHCSVVAINAQKDEAVMAAAQDIHDRLEAAGVEVLLDDRDERPGVKFKDHDLIGIPLRIVVGGKNLAEGNVEFKQRAGGEMQLLAPEQAIESVIAKVRESCGGSR.

This sequence belongs to the class-II aminoacyl-tRNA synthetase family. ProS type 1 subfamily. Homodimer.

The protein localises to the cytoplasm. The enzyme catalyses tRNA(Pro) + L-proline + ATP = L-prolyl-tRNA(Pro) + AMP + diphosphate. Catalyzes the attachment of proline to tRNA(Pro) in a two-step reaction: proline is first activated by ATP to form Pro-AMP and then transferred to the acceptor end of tRNA(Pro). As ProRS can inadvertently accommodate and process non-cognate amino acids such as alanine and cysteine, to avoid such errors it has two additional distinct editing activities against alanine. One activity is designated as 'pretransfer' editing and involves the tRNA(Pro)-independent hydrolysis of activated Ala-AMP. The other activity is designated 'posttransfer' editing and involves deacylation of mischarged Ala-tRNA(Pro). The misacylated Cys-tRNA(Pro) is not edited by ProRS. This is Proline--tRNA ligase from Trichlorobacter lovleyi (strain ATCC BAA-1151 / DSM 17278 / SZ) (Geobacter lovleyi).